Reading from the N-terminus, the 255-residue chain is MTMPLYASPEQLMRERSELARKGIARGRSVVVLKYRGGVLFVAENPSPTLHKVSEIYDRIGFAAVGRYSEFESLRRGGIRHVDLQGYMYDRRDVNARALANVYAQTLSTIFTEQLKPFEVEICVAEVGNNSSEDELYRLTYDGSIVMDEPKFVVMGGQTDAINAKLRETYSDDMELATALAVAVEALRAPSTSGASGNGETEPSKLEVAILDRERPGRKFRRITGAELESLMPAEDERTGSSGGSDKSSGDGEQN.

The segment covering Pro190–Thr201 has biased composition (polar residues). Positions Pro190–Asn255 are disordered. The segment covering Glu202–Gly217 has biased composition (basic and acidic residues).

It belongs to the peptidase T1A family. The 20S proteasome core is composed of 14 alpha and 14 beta subunits that assemble into four stacked heptameric rings, resulting in a barrel-shaped structure. The two inner rings, each composed of seven catalytic beta subunits, are sandwiched by two outer rings, each composed of seven alpha subunits. The catalytic chamber with the active sites is on the inside of the barrel. Has a gated structure, the ends of the cylinder being occluded by the N-termini of the alpha-subunits. Is capped by the proteasome-associated ATPase, ARC.

Its subcellular location is the cytoplasm. Its pathway is protein degradation; proteasomal Pup-dependent pathway. Its activity is regulated as follows. The formation of the proteasomal ATPase ARC-20S proteasome complex, likely via the docking of the C-termini of ARC into the intersubunit pockets in the alpha-rings, may trigger opening of the gate for substrate entry. Interconversion between the open-gate and close-gate conformations leads to a dynamic regulation of the 20S proteasome proteolysis activity. In terms of biological role, component of the proteasome core, a large protease complex with broad specificity involved in protein degradation. The protein is Proteasome subunit alpha of Saccharomonospora viridis (strain ATCC 15386 / DSM 43017 / JCM 3036 / CCUG 5913 / NBRC 12207 / NCIMB 9602 / P101) (Thermoactinomyces viridis).